We begin with the raw amino-acid sequence, 1616 residues long: Protein Shroom2 (1616 aa).

One can recognise a PDZ domain in the interval 26–108; it reads LVEVQLSGGA…TLKLVVKRRS (83 aa). 2 disordered regions span residues 128 to 159 and 183 to 229; these read ELAA…LSSS and HPSS…KADT. A compositionally biased stretch (low complexity) spans 150 to 159; that stretch reads SSSSHDLSSS. Composition is skewed to polar residues over residues 186–197 and 220–229; these read SRLSVAKSNSSI and PDHTLSKADT. Ser-231 bears the Phosphoserine mark. The segment covering 247–259 has biased composition (low complexity); sequence QGGRQAQAAGDPQ. 8 disordered regions span residues 247–475, 502–678, 695–790, 802–869, 881–1100, 1115–1184, 1268–1302, and 1363–1389; these read QGGR…SGWQ, GALE…PLAG, TSFK…SEDT, EETS…LPRR, KEQR…PSPA, PSVF…LTDK, AEPE…PGLS, and QRRK…VPAA. A compositionally biased stretch (pro residues) spans 312–321; that stretch reads SSPPPPPPPL. A phosphoserine mark is found at Ser-313 and Ser-325. Positions 343 to 356 are enriched in low complexity; that stretch reads AAAAQHFTALAQAQ. The span at 358–370 shows a compositional bias: basic and acidic residues; the sequence is RGDRRPELTDRPW. The span at 405–415 shows a compositional bias: low complexity; the sequence is SSRLQASLSSS. At Ser-413 the chain carries Phosphoserine. An ASD1 domain is found at 684–773; the sequence is LKEAQARVLR…SEPEKMNEVG (90 aa). 2 stretches are compositionally biased toward basic and acidic residues: residues 754 to 770 and 821 to 830; these read FTAE…EKMN and IPRDKPERPR. The span at 842–854 shows a compositional bias: polar residues; sequence WSRTTSLGDSLNA. Phosphoserine is present on residues Ser-851, Ser-897, Ser-921, Ser-922, and Ser-924. Position 925 is a phosphothreonine (Thr-925). Positions 926 to 958 are enriched in basic and acidic residues; sequence DHYKQEASVELRRQAGDPGEPREELPSAVRAEE. Ser-974 is subject to Phosphoserine. Polar residues predominate over residues 975–994; it reads PGSQQHPPSQKAPNPPTFSE. Phosphoserine occurs at positions 1036 and 1039. Residues 1068–1077 show a composition bias toward basic and acidic residues; it reads PKREPRRYRA. Residues 1159 to 1176 show a composition bias toward polar residues; it reads LRLQTATMETSRSPSPQF. Phosphoserine is present on residues Ser-1171, Ser-1173, and Ser-1297. Residues 1317 to 1611 form the ASD2 domain; the sequence is EELAREIVGK…QLKCLLDSLQ (295 aa).

It belongs to the shroom family. Interacts with F-actin. As to expression, abundant in retina and melanoma; also in brain, placenta, lung, kidney and pancreas.

Its subcellular location is the apical cell membrane. The protein localises to the cell junction. The protein resides in the tight junction. It is found in the cytoplasm. It localises to the cytoskeleton. May be involved in endothelial cell morphology changes during cell spreading. In the retinal pigment epithelium, may regulate the biogenesis of melanosomes and promote their association with the apical cell surface by inducing gamma-tubulin redistribution. The polypeptide is Protein Shroom2 (SHROOM2) (Homo sapiens (Human)).